The primary structure comprises 227 residues: Mitochondrial inner membrane protease ATP23 (227 aa).

His124 provides a ligand contact to a divalent metal cation. Glu125 is an active-site residue. A divalent metal cation is bound at residue His128.

This sequence belongs to the peptidase M76 family. Interacts with ATP6.

The protein localises to the mitochondrion inner membrane. Its function is as follows. Has a dual role in the assembly of mitochondrial ATPase. Acts as a protease that removes the N-terminal 10 residues of mitochondrial ATPase CF(0) subunit 6 (ATP6) at the intermembrane space side. Also involved in the correct assembly of the membrane-embedded ATPase CF(0) particle, probably mediating association of ATP6 with the subunit 9 ring. The protein is Mitochondrial inner membrane protease ATP23 (ATP23) of Saccharomyces cerevisiae (strain Lalvin EC1118 / Prise de mousse) (Baker's yeast).